A 373-amino-acid polypeptide reads, in one-letter code: DNA replication and repair protein RecF (373 aa).

30–37 is an ATP binding site; it reads GENAQGKT.

It belongs to the RecF family.

The protein resides in the cytoplasm. Its function is as follows. The RecF protein is involved in DNA metabolism; it is required for DNA replication and normal SOS inducibility. RecF binds preferentially to single-stranded, linear DNA. It also seems to bind ATP. This is DNA replication and repair protein RecF from Bacillus cytotoxicus (strain DSM 22905 / CIP 110041 / 391-98 / NVH 391-98).